Here is a 376-residue protein sequence, read N- to C-terminus: N-acetyldiaminopimelate deacetylase (376 aa).

Asp69 is a catalytic residue. The Proton acceptor role is filled by Glu128.

It belongs to the peptidase M20A family. N-acetyldiaminopimelate deacetylase subfamily.

It carries out the reaction N-acetyl-(2S,6S)-2,6-diaminopimelate + H2O = (2S,6S)-2,6-diaminopimelate + acetate. It functions in the pathway amino-acid biosynthesis; L-lysine biosynthesis via DAP pathway; LL-2,6-diaminopimelate from (S)-tetrahydrodipicolinate (acetylase route): step 3/3. Functionally, catalyzes the conversion of N-acetyl-diaminopimelate to diaminopimelate and acetate. The chain is N-acetyldiaminopimelate deacetylase from Streptococcus pneumoniae (strain JJA).